Consider the following 353-residue polypeptide: Protein RecA (353 aa).

68–75 (GPESSGKT) is an ATP binding site.

It belongs to the RecA family.

Its subcellular location is the cytoplasm. Functionally, can catalyze the hydrolysis of ATP in the presence of single-stranded DNA, the ATP-dependent uptake of single-stranded DNA by duplex DNA, and the ATP-dependent hybridization of homologous single-stranded DNAs. It interacts with LexA causing its activation and leading to its autocatalytic cleavage. The chain is Protein RecA from Roseiflexus sp. (strain RS-1).